The primary structure comprises 440 residues: Enolase (440 aa).

Residues His-159 and Glu-168 each contribute to the substrate site. The Proton donor role is filled by Glu-211. 3 residues coordinate Mg(2+): Asp-245, Glu-296, and Asp-321. Residues Glu-296 and Asp-321 each contribute to the substrate site. Catalysis depends on Lys-346, which acts as the Proton acceptor. Substrate-binding positions include Ser-373 to Ser-376 and Lys-397.

It belongs to the enolase family. In terms of assembly, homodimer. It depends on Mg(2+) as a cofactor.

It localises to the cytoplasm. The enzyme catalyses (2R)-2-phosphoglycerate = phosphoenolpyruvate + H2O. It functions in the pathway carbohydrate degradation; glycolysis; pyruvate from D-glyceraldehyde 3-phosphate: step 4/5. The protein is Enolase (eno-1) of Tuber borchii (White truffle).